Consider the following 124-residue polypeptide: Ribonuclease pancreatic A (124 aa).

Positions 1–24 are disordered; that stretch reads AESSAMKFERQHVDSGGSSSSNAN. Residues lysine 7 and arginine 10 each coordinate substrate. Catalysis depends on histidine 12, which acts as the Proton acceptor. 4 disulfide bridges follow: cysteine 26/cysteine 84, cysteine 40/cysteine 95, cysteine 58/cysteine 110, and cysteine 65/cysteine 72. Substrate-binding positions include 41-45, lysine 66, and arginine 85; that span reads KPVNT. The Proton donor role is filled by histidine 119.

It belongs to the pancreatic ribonuclease family. Pancreas.

The protein localises to the secreted. It carries out the reaction an [RNA] containing cytidine + H2O = an [RNA]-3'-cytidine-3'-phosphate + a 5'-hydroxy-ribonucleotide-3'-[RNA].. It catalyses the reaction an [RNA] containing uridine + H2O = an [RNA]-3'-uridine-3'-phosphate + a 5'-hydroxy-ribonucleotide-3'-[RNA].. In Cavia porcellus (Guinea pig), this protein is Ribonuclease pancreatic A.